The following is a 242-amino-acid chain: Adenosylcobinamide-GDP ribazoletransferase (242 aa).

5 helical membrane passes run 31–51 (LLFYPVVGVLFGVLLWALSTA), 52–72 (LMGAPLLLHAALLLTAWVLLS), 109–129 (IAVVTLGLVLLLKFTALVALI), 134–154 (GAALILAPLIGRASMLALFLT), and 188–208 (ILIGGFSGGVAVLLAAICFIG).

It belongs to the CobS family. Requires Mg(2+) as cofactor.

Its subcellular location is the cell inner membrane. The catalysed reaction is alpha-ribazole + adenosylcob(III)inamide-GDP = adenosylcob(III)alamin + GMP + H(+). The enzyme catalyses alpha-ribazole 5'-phosphate + adenosylcob(III)inamide-GDP = adenosylcob(III)alamin 5'-phosphate + GMP + H(+). The protein operates within cofactor biosynthesis; adenosylcobalamin biosynthesis; adenosylcobalamin from cob(II)yrinate a,c-diamide: step 7/7. Functionally, joins adenosylcobinamide-GDP and alpha-ribazole to generate adenosylcobalamin (Ado-cobalamin). Also synthesizes adenosylcobalamin 5'-phosphate from adenosylcobinamide-GDP and alpha-ribazole 5'-phosphate. The chain is Adenosylcobinamide-GDP ribazoletransferase from Pseudomonas fluorescens (strain SBW25).